Here is a 199-residue protein sequence, read N- to C-terminus: Transgelin-3 (199 aa).

Residues 24–136 form the Calponin-homology (CH) domain; the sequence is ADLENKLVDW…RTLMALGSVA (113 aa). At S163 the chain carries Phosphoserine. A Calponin-like repeat occupies 174–199; sequence IGLQMGSNKGASQAGMTGYGMPRQIM. The segment covering 176–188 has biased composition (polar residues); the sequence is LQMGSNKGASQAG. A disordered region spans residues 176–199; it reads LQMGSNKGASQAGMTGYGMPRQIM.

This sequence belongs to the calponin family. As to expression, widely expressed in the brain. Expression is increased in the superior frontal cortex of alcoholics, but not in the motor cortex or cerebellum.

The protein is Transgelin-3 (TAGLN3) of Homo sapiens (Human).